A 249-amino-acid chain; its full sequence is MKFYKYCASGNDFVITNADRKEDRSALAKELCNRYEGIGGDGFIVILPHEKYDFEWEFYNNDGSRAAMCGNGSRAAAHFAHHINKINPNMSFLTGAGIIKAKVNQDKVEVSLGKIKSVQNTFEELGKTWQLCDTGVPHLVHFCQNLDEFDTILCQKMRQKYNANVNFVKILDENHLKVRTYERGVEDETLACGTGMGACFYLAFLNKKVQNKVKITPKSGEEVGFTYKNEELFFEGKVKYCFEANYNFS.

Residues Asn11 and Asn60 each coordinate substrate. The active-site Proton donor is Cys69. Residues 70-71, Asn164, and 182-183 each bind substrate; these read GN and ER. The active-site Proton acceptor is Cys192. Residue 193 to 194 participates in substrate binding; the sequence is GT.

Belongs to the diaminopimelate epimerase family. In terms of assembly, homodimer.

It localises to the cytoplasm. The enzyme catalyses (2S,6S)-2,6-diaminopimelate = meso-2,6-diaminopimelate. It functions in the pathway amino-acid biosynthesis; L-lysine biosynthesis via DAP pathway; DL-2,6-diaminopimelate from LL-2,6-diaminopimelate: step 1/1. Catalyzes the stereoinversion of LL-2,6-diaminopimelate (L,L-DAP) to meso-diaminopimelate (meso-DAP), a precursor of L-lysine and an essential component of the bacterial peptidoglycan. The chain is Diaminopimelate epimerase from Campylobacter jejuni (strain RM1221).